The sequence spans 138 residues: Putative pre-16S rRNA nuclease (138 aa).

The protein belongs to the YqgF nuclease family.

The protein localises to the cytoplasm. Could be a nuclease involved in processing of the 5'-end of pre-16S rRNA. The protein is Putative pre-16S rRNA nuclease of Mycoplasma genitalium (strain ATCC 33530 / DSM 19775 / NCTC 10195 / G37) (Mycoplasmoides genitalium).